Reading from the N-terminus, the 1172-residue chain is Protein diaphanous homolog 3 (1172 aa).

Over residues 1–15 (MEKHRARALGRDSKA) the composition is skewed to basic and acidic residues. The interval 1 to 36 (MEKHRARALGRDSKASRRKGLPSAPPAGPYELGEKR) is disordered. Residues 16–39 (SRRKGLPSAPPAGPYELGEKRPKL) carry the Nuclear localization signal motif. Phosphothreonine is present on Thr47. Ser56 carries the phosphoserine modification. The disordered stretch occupies residues 57–96 (IRIPKGSKKERPPLPQLKTVSGSSDYSSVSSETMENNPKS). Residues 77-87 (SGSSDYSSVSS) are compositionally biased toward low complexity. Residues 94 to 456 (PKSLSENEVL…QIVLHRDGID (363 aa)) enclose the GBD/FH3 domain. A Phosphoserine modification is found at Ser155. Residues 493–530 (CKKFEKECTDHQETQAQLQKKEAKINELQAELQAFKSQ) adopt a coiled-coil conformation. The tract at residues 535-586 (PPGTKIPLQTSAKGEPGPSAFPPAPPALGAGVPPPPPPPPPPPPPLPGMAMP) is disordered. Positions 541–611 (PLQTSAKGEP…GQNFIPLNLP (71 aa)) constitute an FH1 domain. Positions 553-581 (SAFPPAPPALGAGVPPPPPPPPPPPPPLP) are enriched in pro residues. Residues 616–1014 (PKKEFKPEIS…EKRARIAKER (399 aa)) form the FH2 domain. Positions 1037–1067 (DETGVMDSLLEALQSGAAFRDRRKRTPKLKD) constitute a DAD domain. Ser1073 and Ser1158 each carry phosphoserine. Positions 1163–1172 (EALLARLRAL) match the Nuclear export signal motif.

The protein belongs to the formin homology family. Diaphanous subfamily. Post-translationally, ubiquitinated. Expressed in testis. Present in Sertoli cells (at protein level).

It is found in the cytoplasm. It localises to the nucleus. Functionally, actin nucleation and elongation factor required for the assembly of F-actin structures, such as actin cables and stress fibers. Required for cytokinesis, stress fiber formation and transcriptional activation of the serum response factor. Binds to GTP-bound form of Rho and to profilin: acts in a Rho-dependent manner to recruit profilin to the membrane, where it promotes actin polymerization. DFR proteins couple Rho and Src tyrosine kinase during signaling and the regulation of actin dynamics. Also acts as an actin nucleation and elongation factor in the nucleus by promoting nuclear actin polymerization inside the nucleus to drive serum-dependent SRF-MRTFA activity. The chain is Protein diaphanous homolog 3 from Rattus norvegicus (Rat).